Consider the following 225-residue polypeptide: Enolase-phosphatase E1 (225 aa).

It belongs to the HAD-like hydrolase superfamily. MasA/MtnC family. Monomer. Requires Mg(2+) as cofactor.

It carries out the reaction 5-methylsulfanyl-2,3-dioxopentyl phosphate + H2O = 1,2-dihydroxy-5-(methylsulfanyl)pent-1-en-3-one + phosphate. Its pathway is amino-acid biosynthesis; L-methionine biosynthesis via salvage pathway; L-methionine from S-methyl-5-thio-alpha-D-ribose 1-phosphate: step 3/6. The protein operates within amino-acid biosynthesis; L-methionine biosynthesis via salvage pathway; L-methionine from S-methyl-5-thio-alpha-D-ribose 1-phosphate: step 4/6. Its function is as follows. Bifunctional enzyme that catalyzes the enolization of 2,3-diketo-5-methylthiopentyl-1-phosphate (DK-MTP-1-P) into the intermediate 2-hydroxy-3-keto-5-methylthiopentenyl-1-phosphate (HK-MTPenyl-1-P), which is then dephosphorylated to form the acireductone 1,2-dihydroxy-3-keto-5-methylthiopentene (DHK-MTPene). The polypeptide is Enolase-phosphatase E1 (Shewanella halifaxensis (strain HAW-EB4)).